Consider the following 146-residue polypeptide: Ribosome maturation factor RimP (146 aa).

It belongs to the RimP family.

The protein resides in the cytoplasm. Functionally, required for maturation of 30S ribosomal subunits. In Helicobacter pylori (strain G27), this protein is Ribosome maturation factor RimP.